The chain runs to 368 residues: Glutamate 5-kinase (368 aa).

Position 13 (Lys13) interacts with ATP. Substrate contacts are provided by Ser54, Asp141, and Asn153. An ATP-binding site is contributed by Ser173–Asp174. Residues Lys278–Pro355 form the PUA domain.

This sequence belongs to the glutamate 5-kinase family.

It is found in the cytoplasm. It catalyses the reaction L-glutamate + ATP = L-glutamyl 5-phosphate + ADP. It participates in amino-acid biosynthesis; L-proline biosynthesis; L-glutamate 5-semialdehyde from L-glutamate: step 1/2. In terms of biological role, catalyzes the transfer of a phosphate group to glutamate to form L-glutamate 5-phosphate. This chain is Glutamate 5-kinase, found in Jannaschia sp. (strain CCS1).